A 296-amino-acid chain; its full sequence is 4-hydroxy-tetrahydrodipicolinate synthase (296 aa).

Threonine 49 provides a ligand contact to pyruvate. Tyrosine 137 acts as the Proton donor/acceptor in catalysis. Lysine 166 functions as the Schiff-base intermediate with substrate in the catalytic mechanism. A pyruvate-binding site is contributed by isoleucine 208.

It belongs to the DapA family. In terms of assembly, homotetramer; dimer of dimers.

It localises to the cytoplasm. The enzyme catalyses L-aspartate 4-semialdehyde + pyruvate = (2S,4S)-4-hydroxy-2,3,4,5-tetrahydrodipicolinate + H2O + H(+). Its pathway is amino-acid biosynthesis; L-lysine biosynthesis via DAP pathway; (S)-tetrahydrodipicolinate from L-aspartate: step 3/4. Its function is as follows. Catalyzes the condensation of (S)-aspartate-beta-semialdehyde [(S)-ASA] and pyruvate to 4-hydroxy-tetrahydrodipicolinate (HTPA). In Chlorobium luteolum (strain DSM 273 / BCRC 81028 / 2530) (Pelodictyon luteolum), this protein is 4-hydroxy-tetrahydrodipicolinate synthase.